The chain runs to 290 residues: Xyloglucan endotransglucosylase/hydrolase protein 9 (290 aa).

Residues 1–26 (MVGMDLFKCVMMIMVLVVSCGEAVSG) form the signal peptide. The GH16 domain occupies 27 to 215 (AKFDELYRSS…WSHAPFVASY (189 aa)). An N-linked (GlcNAc...) asparagine glycan is attached at Asn-55. The active-site Nucleophile is the Glu-101. The active-site Proton donor is Glu-105. Glu-105 serves as a coordination point for xyloglucan. Residue Asn-109 is glycosylated (N-linked (GlcNAc...) asparagine). Residues 118-120 (QTN), 128-130 (NRE), 194-195 (DW), and Gly-199 each bind xyloglucan. 2 cysteine pairs are disulfide-bonded: Cys-223–Cys-234 and Cys-271–Cys-284. Xyloglucan is bound at residue Arg-276.

This sequence belongs to the glycosyl hydrolase 16 family. XTH group 1 subfamily. Post-translationally, contains at least one intrachain disulfide bond essential for its enzymatic activity. As to expression, highly expressed in shoot apices. In the vegetative and reproductive phases, it accumulates in the shoot apex region, where cell division is most active. In the reproductive phase, it is also expressed in flower buds, flower stalks and internodes bearing flowers.

Its subcellular location is the secreted. The protein resides in the cell wall. The protein localises to the extracellular space. It localises to the apoplast. The enzyme catalyses breaks a beta-(1-&gt;4) bond in the backbone of a xyloglucan and transfers the xyloglucanyl segment on to O-4 of the non-reducing terminal glucose residue of an acceptor, which can be a xyloglucan or an oligosaccharide of xyloglucan.. Catalyzes xyloglucan endohydrolysis (XEH) and/or endotransglycosylation (XET). Cleaves and religates xyloglucan polymers, an essential constituent of the primary cell wall, and thereby participates in cell wall construction of growing tissues. Involved in internodal cell elongation. This chain is Xyloglucan endotransglucosylase/hydrolase protein 9 (XTH9), found in Arabidopsis thaliana (Mouse-ear cress).